Here is a 252-residue protein sequence, read N- to C-terminus: Triosephosphate isomerase (252 aa).

10–12 lines the substrate pocket; it reads NWK. Residue His-96 is the Electrophile of the active site. The active-site Proton acceptor is the Glu-168. Residues Gly-174, Ser-213, and 234-235 each bind substrate; that span reads GG.

Belongs to the triosephosphate isomerase family. In terms of assembly, homodimer.

The protein localises to the cytoplasm. It catalyses the reaction D-glyceraldehyde 3-phosphate = dihydroxyacetone phosphate. It functions in the pathway carbohydrate biosynthesis; gluconeogenesis. Its pathway is carbohydrate degradation; glycolysis; D-glyceraldehyde 3-phosphate from glycerone phosphate: step 1/1. Its function is as follows. Involved in the gluconeogenesis. Catalyzes stereospecifically the conversion of dihydroxyacetone phosphate (DHAP) to D-glyceraldehyde-3-phosphate (G3P). The chain is Triosephosphate isomerase from Idiomarina loihiensis (strain ATCC BAA-735 / DSM 15497 / L2-TR).